The primary structure comprises 211 residues: 3-demethoxyubiquinol 3-hydroxylase (211 aa).

6 residues coordinate Fe cation: Glu60, Glu90, His93, Glu142, Glu174, and His177.

It belongs to the COQ7 family. The cofactor is Fe cation.

The protein localises to the cell membrane. The enzyme catalyses a 5-methoxy-2-methyl-3-(all-trans-polyprenyl)benzene-1,4-diol + AH2 + O2 = a 3-demethylubiquinol + A + H2O. It participates in cofactor biosynthesis; ubiquinone biosynthesis. In terms of biological role, catalyzes the hydroxylation of 2-nonaprenyl-3-methyl-6-methoxy-1,4-benzoquinol during ubiquinone biosynthesis. The sequence is that of 3-demethoxyubiquinol 3-hydroxylase from Francisella tularensis subsp. holarctica (strain FTNF002-00 / FTA).